The primary structure comprises 260 residues: tRNA pseudouridine synthase B (260 aa).

His-44 serves as a coordination point for substrate. Asp-49 functions as the Nucleophile in the catalytic mechanism. Residues Tyr-77, Tyr-180, and Leu-201 each coordinate substrate.

Belongs to the pseudouridine synthase TruB family. Type 1 subfamily.

The enzyme catalyses uridine(55) in tRNA = pseudouridine(55) in tRNA. Responsible for synthesis of pseudouridine from uracil-55 in the psi GC loop of transfer RNAs. The chain is tRNA pseudouridine synthase B from Blochmanniella pennsylvanica (strain BPEN).